An 81-amino-acid chain; its full sequence is Putative chemokine-related protein B42 (81 aa).

3 cysteine pairs are disulfide-bonded: Cys-7-Cys-73, Cys-8-Cys-29, and Cys-11-Cys-45.

Expressed in placenta, heart, lung, liver, pancreas, skeletal muscle and brain.

It is found in the cytoplasm. This is Putative chemokine-related protein B42 from Homo sapiens (Human).